The chain runs to 67 residues: Stomoxyn (67 aa).

A signal peptide spans 1-24 (MNFYKYLVVLVVLVLCLSATQTEA). Position 66 is a threonine amide (Thr-66).

In terms of tissue distribution, constitutively expressed in the adult anterior midgut; proventriculus, thoracic and reservoir regions.

It is found in the secreted. Has antimicrobial activity against most Gram-positive and Gram-negative bacteria, filamentous fungi and yeasts tested. Has trypanolytic effect on T.b.rhodesiense and limited hemolytic activity against bovine red blood cells. Its function is as follows. May play an important role in protecting the stored blood in the anterior midgut from microorganisms prior to digestion. Adopts an amphipathic alpha-helical structure only in the presence of an organic solvent that mimics a phospholipid membrane. The chain is Stomoxyn from Stomoxys calcitrans (Stable fly).